Reading from the N-terminus, the 758-residue chain is ATP-dependent RNA helicase dbp7 (758 aa).

Disordered regions lie at residues 26 to 99 (GGTW…QPRQ) and 111 to 130 (PQKVEEVKEEGHVEDAKPTN). Over residues 35–45 (AKKIAKHHAKG) the composition is skewed to basic residues. The segment covering 84–99 (GKQQSHTHPHSNQPRQ) has biased composition (polar residues). Basic and acidic residues predominate over residues 111–127 (PQKVEEVKEEGHVEDAK). The Q motif motif lies at 138-167 (DTFTNLGLSPSLAAHLLTKLELKAPTAIQK). Positions 171–372 (SQLLKEEGDA…EISLKDAVHI (202 aa)) constitute a Helicase ATP-binding domain. 184-191 (AETGSGKT) serves as a coordination point for ATP. The short motif at 308–311 (DEGD) is the DEAD box element. The region spanning 398 to 603 (QLKQSYAVVA…ALTRADANDI (206 aa)) is the Helicase C-terminal domain. Disordered stretches follow at residues 455-483 (KEDGDESSDTDKSEDKPPSSPHGTIAPAT) and 691-758 (VPGL…FNLA). The segment covering 696 to 709 (QGKEETKKDFKAER) has biased composition (basic and acidic residues).

The protein belongs to the DEAD box helicase family. DDX31/DBP7 subfamily.

Its subcellular location is the nucleus. The protein resides in the nucleolus. The catalysed reaction is ATP + H2O = ADP + phosphate + H(+). Its function is as follows. ATP-binding RNA helicase involved in the biogenesis of 60S ribosomal subunits and is required for the normal formation of 25S and 5.8S rRNAs. This Neosartorya fischeri (strain ATCC 1020 / DSM 3700 / CBS 544.65 / FGSC A1164 / JCM 1740 / NRRL 181 / WB 181) (Aspergillus fischerianus) protein is ATP-dependent RNA helicase dbp7 (dbp7).